The chain runs to 249 residues: MRQKIVAGNWKMNGQIQQVTELVSQIEELIGFDCAAQVAVMPPSIYIPKVRDCLKTGKVVVGAQNVYPKDYGAYTGELSAPMLKDFDCRYVLVGHSERRQFFHEDENFVAQKFHHVKDHGMIPILCVGETLSERENGKTEQVIAQQVLAVSAKGKDCFRDCVVAYEPVWAIGTGKTATPEQAQKIHQFIRDLVGEINDSDAKHLTLIYGGSVNENNAKALFSMPDIDGGLVGGASLNAKQFVEIVKCIN.

9–11 (NWK) serves as a coordination point for substrate. H95 acts as the Electrophile in catalysis. The Proton acceptor role is filled by E166. Residues G172, S211, and 232 to 233 (GG) each bind substrate.

Belongs to the triosephosphate isomerase family. Homodimer.

The protein localises to the cytoplasm. It carries out the reaction D-glyceraldehyde 3-phosphate = dihydroxyacetone phosphate. The protein operates within carbohydrate biosynthesis; gluconeogenesis. It participates in carbohydrate degradation; glycolysis; D-glyceraldehyde 3-phosphate from glycerone phosphate: step 1/1. Functionally, involved in the gluconeogenesis. Catalyzes stereospecifically the conversion of dihydroxyacetone phosphate (DHAP) to D-glyceraldehyde-3-phosphate (G3P). In Legionella pneumophila (strain Paris), this protein is Triosephosphate isomerase.